The following is a 291-amino-acid chain: Dihydroorotate dehydrogenase A (fumarate) (291 aa).

FMN contacts are provided by residues Ser-18 and 42–43; that span reads KS. Substrate contacts are provided by residues Lys-42, 66 to 70, and Asn-126; that span reads NAVGL. Asn-126 contributes to the FMN binding site. Cys-129 acts as the Nucleophile in catalysis. The FMN site is built by Lys-164 and Ile-190. A substrate-binding site is contributed by 191–192; it reads NT. FMN contacts are provided by residues Gly-216, 242 to 243, and 264 to 265; these read GG and GS.

Belongs to the dihydroorotate dehydrogenase family. Type 1 subfamily. Homodimer. The cofactor is FMN.

It is found in the cytoplasm. The catalysed reaction is (S)-dihydroorotate + fumarate = orotate + succinate. It participates in pyrimidine metabolism; UMP biosynthesis via de novo pathway. In terms of biological role, catalyzes the conversion of dihydroorotate to orotate with fumarate as the electron acceptor. The protein is Dihydroorotate dehydrogenase A (fumarate) (pyrD) of Lacticaseibacillus paracasei (strain ATCC 334 / BCRC 17002 / CCUG 31169 / CIP 107868 / KCTC 3260 / NRRL B-441) (Lactobacillus paracasei).